The sequence spans 529 residues: Probable alpha-galactosidase A (529 aa).

The first 19 residues, 1 to 19 (MKALFAAITMAHALLQTQA), serve as a signal peptide directing secretion. An intrachain disulfide couples Cys42 to Cys74. N-linked (GlcNAc...) asparagine glycans are attached at residues Asn45, Asn83, Asn89, and Asn119. The cysteines at positions 122 and 152 are disulfide-linked. The active-site Nucleophile is Asp150. Residue Asn199 is glycosylated (N-linked (GlcNAc...) asparagine). The Proton donor role is filled by Asp208. Asn351 carries N-linked (GlcNAc...) asparagine glycosylation. In terms of domain architecture, Ricin B-type lectin spans 408 to 528 (RVDAVSTGIV…GLPSGVRVSG (121 aa)). Intrachain disulfides connect Cys425–Cys438 and Cys462–Cys475.

Belongs to the glycosyl hydrolase 27 family.

It localises to the secreted. The enzyme catalyses Hydrolysis of terminal, non-reducing alpha-D-galactose residues in alpha-D-galactosides, including galactose oligosaccharides, galactomannans and galactolipids.. Its function is as follows. Hydrolyzes a variety of simple alpha-D-galactoside as well as more complex molecules such as oligosaccharides and polysaccharides. This Aspergillus terreus (strain NIH 2624 / FGSC A1156) protein is Probable alpha-galactosidase A (aglA).